The primary structure comprises 497 residues: Early growth response protein 1-A (497 aa).

Positions 139-165 (SPSSAPSSSPSSSSSSSSSQSPPLSCS) are enriched in low complexity. Disordered stretches follow at residues 139-169 (SPSS…VQSN), 175-194 (YSAA…DHSP), and 286-309 (PSRM…YGCP). 3 consecutive C2H2-type zinc fingers follow at residues 306-330 (YGCP…IRIH), 336-358 (FQCR…IRTH), and 364-386 (FACD…TKIH). The interval 377 to 441 (DERKRHTKIH…SYPSPVHSSF (65 aa)) is disordered. A compositionally biased stretch (basic residues) spans 381–391 (RHTKIHLRQKD). Low complexity predominate over residues 397 to 441 (ATPVSVASPVSSYSPSASTSYPSPVPTSYSSPVSSSYPSPVHSSF).

Belongs to the EGR C2H2-type zinc-finger protein family. In terms of tissue distribution, expressed in the presumptive mesoderm. In blastula embryos, expressed in the dorsal marginal zone, and at the onset of gastrulation expression is specific to the Spemann organizer. As gastrulation proceeds, expressed in a ring around the yolk plug. This expression is maintained in advanced gastrulae, with weak expression also extending into the dorsal midline. By the neurula stage, expression is excluded from the notochord. In late tailbud stages, expressed in two spots in the anterior forebrain, which are connected via a bridge of cells that also show expression.

It localises to the nucleus. The protein localises to the cytoplasm. In terms of biological role, transcriptional regulator. Recognizes and binds to the DNA sequence 5'-GCG(T/G)GGGCG-3'(EGR-site) in the promoter region of target genes. Binds double-stranded target DNA, irrespective of the cytosine methylation status. Regulates the transcription of numerous target genes, and thereby plays an important role in regulating the response to growth factors, DNA damage, and ischemia. Plays a role in the regulation of cell survival, proliferation and cell death. Mediates responses to ischemia and hypoxia; regulates the expression of proteins that are involved in inflammatory processes. Plays a role in regulating the expression of circadian clock genes. In Xenopus laevis (African clawed frog), this protein is Early growth response protein 1-A (egr1-a).